The primary structure comprises 352 residues: Ion-translocating oxidoreductase complex subunit D (352 aa).

Helical transmembrane passes span 20–40 (IMLLVVIAALPGIAAQTWFFG), 42–62 (GTLFQIVLAAITALVAEAIVL), 69–91 (VASHLQDYSALLTGLLLAVSIPP), and 123–143 (PAMIGYVVLLISFPVQMTSWL). T187 is subject to FMN phosphoryl threonine. 5 helical membrane-spanning segments follow: residues 215 to 235 (LAGVGWQWVNLAWLVGGVFLL), 242 to 262 (WHIPVSFLLTLALCAALGWLF), 267 to 287 (LASPQLHLLSGATMLGAFFIL), 301 to 321 (LIFGALAGVLVWLIRSFGGYP), and 322 to 342 (DGVAFAVLLANITVPLIDYYT).

The protein belongs to the NqrB/RnfD family. As to quaternary structure, the complex is composed of six subunits: RsxA, RsxB, RsxC, RsxD, RsxE and RsxG. The cofactor is FMN.

It localises to the cell inner membrane. In terms of biological role, part of a membrane-bound complex that couples electron transfer with translocation of ions across the membrane. Required to maintain the reduced state of SoxR. In Salmonella dublin (strain CT_02021853), this protein is Ion-translocating oxidoreductase complex subunit D.